Reading from the N-terminus, the 282-residue chain is HTH-type transcriptional activator RhaR (282 aa).

The HTH araC/xylS-type domain occupies 179–277 (DKLITALANS…GMTPSQWRHL (99 aa)). DNA-binding regions (H-T-H motif) lie at residues 196 to 217 (DAFC…RAQT) and 244 to 267 (ISEI…TRET).

As to quaternary structure, binds DNA as a dimer.

The protein resides in the cytoplasm. Functionally, activates expression of the rhaSR operon in response to L-rhamnose. The protein is HTH-type transcriptional activator RhaR of Salmonella dublin (strain CT_02021853).